A 240-amino-acid chain; its full sequence is ATP synthase subunit a 1 (240 aa).

Transmembrane regions (helical) follow at residues 23 to 43 (GQVL…SVLA), 82 to 102 (VPFI…GALF), 120 to 140 (DINT…YAGF), 186 to 206 (LVVA…VMLL), and 207 to 227 (GLFT…AYIH).

This sequence belongs to the ATPase A chain family. As to quaternary structure, F-type ATPases have 2 components, CF(1) - the catalytic core - and CF(0) - the membrane proton channel. CF(1) has five subunits: alpha(3), beta(3), gamma(1), delta(1), epsilon(1). CF(0) has four main subunits: a, b, b' and c.

It localises to the cellular thylakoid membrane. Key component of the proton channel; it plays a direct role in the translocation of protons across the membrane. The protein is ATP synthase subunit a 1 of Acaryochloris marina (strain MBIC 11017).